The primary structure comprises 352 residues: Holliday junction branch migration complex subunit RuvB (352 aa).

The tract at residues 4-185 is large ATPase domain (RuvB-L); it reads PDRLISAVSG…FGIVQRLEFY (182 aa). Residues isoleucine 24, arginine 25, glycine 66, lysine 69, threonine 70, threonine 71, 132 to 134, arginine 175, tyrosine 185, and arginine 222 contribute to the ATP site; that span reads EDF. Threonine 70 serves as a coordination point for Mg(2+). The small ATPAse domain (RuvB-S) stretch occupies residues 186–256; that stretch reads NVEDLATIVS…IADKALNLLD (71 aa). The interval 259-352 is head domain (RuvB-H); it reads ERGFDHLDRR…TDLFTSEDGN (94 aa). DNA is bound by residues arginine 295, arginine 314, and arginine 319.

The protein belongs to the RuvB family. Homohexamer. Forms an RuvA(8)-RuvB(12)-Holliday junction (HJ) complex. HJ DNA is sandwiched between 2 RuvA tetramers; dsDNA enters through RuvA and exits via RuvB. An RuvB hexamer assembles on each DNA strand where it exits the tetramer. Each RuvB hexamer is contacted by two RuvA subunits (via domain III) on 2 adjacent RuvB subunits; this complex drives branch migration. In the full resolvosome a probable DNA-RuvA(4)-RuvB(12)-RuvC(2) complex forms which resolves the HJ.

Its subcellular location is the cytoplasm. It catalyses the reaction ATP + H2O = ADP + phosphate + H(+). Functionally, the RuvA-RuvB-RuvC complex processes Holliday junction (HJ) DNA during genetic recombination and DNA repair, while the RuvA-RuvB complex plays an important role in the rescue of blocked DNA replication forks via replication fork reversal (RFR). RuvA specifically binds to HJ cruciform DNA, conferring on it an open structure. The RuvB hexamer acts as an ATP-dependent pump, pulling dsDNA into and through the RuvAB complex. RuvB forms 2 homohexamers on either side of HJ DNA bound by 1 or 2 RuvA tetramers; 4 subunits per hexamer contact DNA at a time. Coordinated motions by a converter formed by DNA-disengaged RuvB subunits stimulates ATP hydrolysis and nucleotide exchange. Immobilization of the converter enables RuvB to convert the ATP-contained energy into a lever motion, pulling 2 nucleotides of DNA out of the RuvA tetramer per ATP hydrolyzed, thus driving DNA branch migration. The RuvB motors rotate together with the DNA substrate, which together with the progressing nucleotide cycle form the mechanistic basis for DNA recombination by continuous HJ branch migration. Branch migration allows RuvC to scan DNA until it finds its consensus sequence, where it cleaves and resolves cruciform DNA. The sequence is that of Holliday junction branch migration complex subunit RuvB from Pseudomonas aeruginosa (strain LESB58).